Consider the following 562-residue polypeptide: Pentatricopeptide repeat-containing protein At3g22670, mitochondrial (562 aa).

A mitochondrion-targeting transit peptide spans 1 to 31; the sequence is MLTKLRISKLVSYTLPRRIFQRRFLVTNNTA. PPR repeat units lie at residues 165-199, 202-232, 238-268, 272-306, 307-341, 342-376, 377-411, 412-446, 450-484, and 485-519; these read SGHT…EESK, TLDT…MEKS, DTIA…LFDT, DART…EFTP, DVVT…GCNP, NVVT…GCVP, DAKF…GVRR, DVLV…EGES, NVET…DVSI, and DVST…GMVP.

This sequence belongs to the PPR family. P subfamily.

Its subcellular location is the mitochondrion. The protein is Pentatricopeptide repeat-containing protein At3g22670, mitochondrial of Arabidopsis thaliana (Mouse-ear cress).